A 640-amino-acid polypeptide reads, in one-letter code: Choline O-acetyltransferase (640 aa).

S17 carries the post-translational modification Phosphoserine. H334 serves as the catalytic Proton acceptor. Position 365 is a phosphoserine (S365). CoA contacts are provided by residues 412-424 (GKTFIKKQKYSPD), S450, and Q551. The interval 614–640 (CSSRQPADSKPPAPKEKARGPSQAKQS) is disordered.

It belongs to the carnitine/choline acetyltransferase family. Monomer.

It catalyses the reaction choline + acetyl-CoA = acetylcholine + CoA. Its function is as follows. Catalyzes the reversible synthesis of acetylcholine (ACh) from acetyl CoA and choline at cholinergic synapses. This is Choline O-acetyltransferase (Chat) from Rattus norvegicus (Rat).